Here is a 68-residue protein sequence, read N- to C-terminus: Large ribosomal subunit protein uL29 (68 aa).

It belongs to the universal ribosomal protein uL29 family.

The protein is Large ribosomal subunit protein uL29 of Chlorobaculum tepidum (strain ATCC 49652 / DSM 12025 / NBRC 103806 / TLS) (Chlorobium tepidum).